The primary structure comprises 302 residues: Sulfate adenylyltransferase subunit 2 (302 aa).

The protein belongs to the PAPS reductase family. CysD subfamily. In terms of assembly, heterodimer composed of CysD, the smaller subunit, and CysN.

It carries out the reaction sulfate + ATP + H(+) = adenosine 5'-phosphosulfate + diphosphate. It functions in the pathway sulfur metabolism; hydrogen sulfide biosynthesis; sulfite from sulfate: step 1/3. Functionally, with CysN forms the ATP sulfurylase (ATPS) that catalyzes the adenylation of sulfate producing adenosine 5'-phosphosulfate (APS) and diphosphate, the first enzymatic step in sulfur assimilation pathway. APS synthesis involves the formation of a high-energy phosphoric-sulfuric acid anhydride bond driven by GTP hydrolysis by CysN coupled to ATP hydrolysis by CysD. The protein is Sulfate adenylyltransferase subunit 2 of Escherichia coli O81 (strain ED1a).